Here is a 375-residue protein sequence, read N- to C-terminus: Citrate synthase (375 aa).

Catalysis depends on residues His266 and Asp317.

The protein belongs to the citrate synthase family. Homohexamer.

The enzyme catalyses oxaloacetate + acetyl-CoA + H2O = citrate + CoA + H(+). The protein operates within carbohydrate metabolism; tricarboxylic acid cycle; isocitrate from oxaloacetate: step 1/2. With respect to regulation, allosterically inhibited by NADH. The protein is Citrate synthase (gltA) of Mycolicibacterium smegmatis (Mycobacterium smegmatis).